A 735-amino-acid polypeptide reads, in one-letter code: DNA replication licensing factor mcm5-A (735 aa).

Positions 332–538 (IYETVAKSIA…RDMTLAKHVM (207 aa)) constitute an MCM domain. R372 serves as a coordination point for ADP. The Arginine finger signature appears at 513-516 (SRFD).

It belongs to the MCM family. As to quaternary structure, component of the mcm2-7 complex (RLF-M). The complex forms a toroidal hexameric ring with the proposed subunit order mcm2-mcm6-mcm4-mcm7-mcm3-mcm5. The heterodimer of mmcm3/mcm5 interacts with mcm4, mmcm6, mcm7 and weakly with mcm2. Component of the CMG helicase complex, composed of the mcm2-7 complex, the GINS complex and cdc45.

Its subcellular location is the nucleus. It localises to the chromosome. It catalyses the reaction ATP + H2O = ADP + phosphate + H(+). In terms of biological role, acts as a component of the MCM2-7 complex (MCM complex) which is the replicative helicase essential for 'once per cell cycle' DNA replication initiation and elongation in eukaryotic cells. Core component of CDC45-MCM-GINS (CMG) helicase, the molecular machine that unwinds template DNA during replication, and around which the replisome is built. The active ATPase sites in the MCM2-7 ring are formed through the interaction surfaces of two neighboring subunits such that a critical structure of a conserved arginine finger motif is provided in trans relative to the ATP-binding site of the Walker A box of the adjacent subunit. The six ATPase active sites, however, are likely to contribute differentially to the complex helicase activity. The polypeptide is DNA replication licensing factor mcm5-A (mcm5-a) (Xenopus laevis (African clawed frog)).